The following is a 303-amino-acid chain: Shikimate kinase 1, chloroplastic (303 aa).

The transit peptide at 1 to 66 (MEAAITQRIQ…QRRAVSPAVS (66 aa)) directs the protein to the chloroplast. Position 109–116 (109–116 (GMMGSGKT)) interacts with ATP. Thr-116 serves as a coordination point for Mg(2+). Residues Asp-134, Arg-159, and Gly-181 each coordinate substrate. Arg-220 is an ATP binding site.

The protein belongs to the shikimate kinase family. As to quaternary structure, homodimer. It depends on Mg(2+) as a cofactor.

It is found in the plastid. Its subcellular location is the chloroplast. The catalysed reaction is shikimate + ATP = 3-phosphoshikimate + ADP + H(+). The protein operates within metabolic intermediate biosynthesis; chorismate biosynthesis; chorismate from D-erythrose 4-phosphate and phosphoenolpyruvate: step 5/7. Its function is as follows. Catalyzes the specific phosphorylation of the 3-hydroxyl group of shikimic acid using ATP as a cosubstrate. This is Shikimate kinase 1, chloroplastic (SK1) from Arabidopsis thaliana (Mouse-ear cress).